The sequence spans 359 residues: Malonyl-CoA reductase (359 aa).

16–19 (TGLV) contacts NADP(+). C153 (acyl-thioester intermediate) is an active-site residue. An NADP(+)-binding site is contributed by 183–184 (SG). Residue H248 is the Proton acceptor of the active site. Residue 335-336 (NT) coordinates NADP(+).

It belongs to the aspartate-semialdehyde dehydrogenase family. In terms of assembly, homodimer and possibly a tetramer. Mg(2+) is required as a cofactor. It depends on Mn(2+) as a cofactor.

It carries out the reaction 3-oxopropanoate + NADP(+) + CoA = malonyl-CoA + NADPH + H(+). Activated by dithioerythritol (5 mM) and inhibited by the thiol-blocking agent iodoacetamide (0.1 mM). Its function is as follows. Catalyzes the reduction of malonyl-CoA to malonate semialdehyde, a key step in the 3-hydroxypropanoate and the 3-hydroxypropanoate/4-hydroxybutyrate cycles. Can also use succinyl-CoA and succinate semialdehyde as substrates but at a lower rate than malonyl-CoA. This is Malonyl-CoA reductase (mcr) from Sulfurisphaera tokodaii (strain DSM 16993 / JCM 10545 / NBRC 100140 / 7) (Sulfolobus tokodaii).